The following is a 136-amino-acid chain: Ribosome-binding factor A (136 aa).

The tract at residues 114 to 136 (DRANRPGPAADEPDEPDEPEDRR) is disordered. Positions 124–136 (DEPDEPDEPEDRR) are enriched in acidic residues.

The protein belongs to the RbfA family. Monomer. Binds 30S ribosomal subunits, but not 50S ribosomal subunits or 70S ribosomes.

It localises to the cytoplasm. In terms of biological role, one of several proteins that assist in the late maturation steps of the functional core of the 30S ribosomal subunit. Associates with free 30S ribosomal subunits (but not with 30S subunits that are part of 70S ribosomes or polysomes). Required for efficient processing of 16S rRNA. May interact with the 5'-terminal helix region of 16S rRNA. The sequence is that of Ribosome-binding factor A from Bordetella petrii (strain ATCC BAA-461 / DSM 12804 / CCUG 43448).